A 98-amino-acid chain; its full sequence is DNA-binding protein Fis (98 aa).

Positions 74–93 form a DNA-binding region, H-T-H motif; sequence QTRAALMMGINRGTLRKKLK.

The protein belongs to the transcriptional regulatory Fis family. Homodimer.

Activates ribosomal RNA transcription. Plays a direct role in upstream activation of rRNA promoters. This chain is DNA-binding protein Fis, found in Yersinia enterocolitica serotype O:8 / biotype 1B (strain NCTC 13174 / 8081).